A 116-amino-acid chain; its full sequence is Large ribosomal subunit protein bL17 (116 aa).

The protein belongs to the bacterial ribosomal protein bL17 family. In terms of assembly, part of the 50S ribosomal subunit. Contacts protein L32.

This is Large ribosomal subunit protein bL17 from Prochlorococcus marinus (strain MIT 9303).